Consider the following 402-residue polypeptide: Arginine deiminase (402 aa).

Cysteine 392 (amidino-cysteine intermediate) is an active-site residue.

Belongs to the arginine deiminase family.

It localises to the cytoplasm. The catalysed reaction is L-arginine + H2O = L-citrulline + NH4(+). It functions in the pathway amino-acid degradation; L-arginine degradation via ADI pathway; carbamoyl phosphate from L-arginine: step 1/2. The protein is Arginine deiminase of Mycolicibacterium gilvum (strain PYR-GCK) (Mycobacterium gilvum (strain PYR-GCK)).